The sequence spans 257 residues: Uxu operon transcriptional regulator (257 aa).

Residues 8–76 (QRPYQEVGAM…RGAGIYVLDN (69 aa)) enclose the HTH gntR-type domain. The H-T-H motif DNA-binding region spans 36-55 (EREIAEMLDVTRTVVREALI).

Functionally, repressor for the uxuRBA operon. The polypeptide is Uxu operon transcriptional regulator (uxuR) (Escherichia coli (strain K12)).